Consider the following 140-residue polypeptide: C-type lectin 6 (140 aa).

The N-terminal stretch at 1 to 23 (MGRLVFVSFGLLVVFLSLSGTGA) is a signal peptide. 3 disulfide bridges follow: cysteine 25–cysteine 36, cysteine 53–cysteine 138, and cysteine 115–cysteine 130. The C-type lectin domain occupies 32-139 (YEGHCYRVFQ…CSKTHNVICK (108 aa)).

The protein belongs to the snaclec family. In terms of assembly, heteromultimer; disulfide-linked. As to expression, expressed by the venom gland.

The protein resides in the secreted. Functionally, interferes with one step of hemostasis (modulation of platelet aggregation, or coagulation cascade, for example). This is C-type lectin 6 from Crotalus adamanteus (Eastern diamondback rattlesnake).